Reading from the N-terminus, the 90-residue chain is Probable acyl carrier protein (90 aa).

One can recognise a Carrier domain in the interval 9–90; it reads QVTVEELSAL…LVNGALKTGV (82 aa). O-(pantetheine 4'-phosphoryl)serine is present on S47.

4'-phosphopantetheine is transferred from CoA to a specific serine of the apo-ACP-like protein.

Functionally, involved in developmentally regulated synthesis of a compound biosynthetically related to polyketide antibiotics which is essential for spore color in Streptomyces coelicolor. This is Probable acyl carrier protein from Streptomyces coelicolor (strain ATCC BAA-471 / A3(2) / M145).